A 407-amino-acid chain; its full sequence is MRPSPALAGGGRTVANLLSATEWMLPSPATQVHTISVLPSHSPPSPPHHFAFSNLTTAPKRNGGKGEEEGRPRFEVVRDDLLHPLANGNKARKLDALLPLLRRRGATDVVTCGGCQSAHAAATAVHCAEWGMRPHILLRGEQPDIPTGYNLISLMFGNVAYASRSVYAHRDEMLYNHARKVAGTGGTVLWADDISKEDFVLDEDNGCEIGSRRVVIIKEGAGDVQALLGVIRLVEYLYNLSSFHKHENVHVVVDAGTGTTAVGLALGAVCLGLHWRVTAVMLADTLERYKEREKSLISDFKKLCHNNYHEMVGENDIGDSLVEWVERFSPRRFGKVLNGEIALCRQIAQQTGILLDPMYTLAGWEQAVDLCVGDSRTKVVMIHTGGTLGFCGLAQRYSSHFTSDEQT.

A mitochondrion-targeting transit peptide spans 1–34; sequence MRPSPALAGGGRTVANLLSATEWMLPSPATQVHT. Residues 39 to 72 form a disordered region; sequence PSHSPPSPPHHFAFSNLTTAPKRNGGKGEEEGRP. Residue Lys-90 is modified to N6-(pyridoxal phosphate)lysine.

The protein belongs to the ACC deaminase/D-cysteine desulfhydrase family. The cofactor is pyridoxal 5'-phosphate.

It is found in the mitochondrion. It carries out the reaction D-cysteine + H2O = hydrogen sulfide + pyruvate + NH4(+) + H(+). Its function is as follows. Catalyzes the production of hydrogen sulfide (H2S) from cysteine. The polypeptide is Putative D-cysteine desulfhydrase 2, mitochondrial (Oryza sativa subsp. japonica (Rice)).